The primary structure comprises 549 residues: TBC1 domain family member 3I (549 aa).

One can recognise a Rab-GAP TBC domain in the interval 101-293 (GMPMNIRGPM…RLWDVYLVEG (193 aa)). S-palmitoyl cysteine attachment occurs at residues Cys318 and Cys325. Disordered regions lie at residues 350-443 (LTRK…QGGP) and 507-526 (AAPS…DEQQ). Over residues 398–417 (PRPIWSASPPRAPRSSTPCP) the composition is skewed to low complexity.

Ubiquitinated by a CUL7-based E3 ligase, which leads to proteasomal degradation. Post-translationally, palmitoylation is required for membrane localization and protects TBC1D3 from ubiquitination.

The protein localises to the cell membrane. Acts as a GTPase activating protein for RAB5. Does not act on RAB4 or RAB11. This Homo sapiens (Human) protein is TBC1 domain family member 3I.